We begin with the raw amino-acid sequence, 299 residues long: MALLIITTILWAFSFSLFGEYLAGHVDSYFAVLIRVGLAALVFLPFLRTRGHNLKTISLYMLVGAMQLGIMYMLSFHAYLYLTVSELLLFTVLTPLYITLIYDVMSQRRLRWGYAFSALLAVIGAGIIRYDRVTDHFWVGLLLVQLSNISFAIGMVGYKRLMETRPMPQHNAFAWFYLGAFLVAAVAWSLLGNAQKLPETTLQWSILVFLGVVASGIGYFMWNYGATQVDAGTLGIMNNMHVPAGLLVNLAIWHQQPHWPSFITGAAVILASLWVHRKWVAPRSAQTADDRRRDPASSE.

The next 10 helical transmembrane spans lie at Ala2 to Leu22, Val26 to Phe46, Thr56 to Phe76, Tyr81 to Ile101, Leu110 to Tyr130, Phe137 to Gly157, Ala172 to Gly192, Leu202 to Trp222, Thr233 to Trp253, and Gln256 to His276. EamA domains are found at residues Leu3–Ile128 and Val139–Trp274.

It belongs to the drug/metabolite transporter (DMT) superfamily. 10 TMS drug/metabolite exporter (DME) (TC 2.A.7.3) family.

Its subcellular location is the cell inner membrane. It catalyses the reaction biotin(in) = biotin(out). Uptake of biotin. This chain is Biotin transporter, found in Salmonella typhi.